Here is a 511-residue protein sequence, read N- to C-terminus: GMP synthase [glutamine-hydrolyzing] (511 aa).

One can recognise a Glutamine amidotransferase type-1 domain in the interval 5-195 (PIVVLDFGSQ…AKHICGCEST (191 aa)). The active-site Nucleophile is the cysteine 82. Active-site residues include histidine 169 and glutamate 171. In terms of domain architecture, GMPS ATP-PPase spans 196–386 (WNMGSFAKEQ…LGLPKSMISR (191 aa)). 223 to 229 (SGGVDSS) contributes to the ATP binding site.

In terms of assembly, homodimer.

It carries out the reaction XMP + L-glutamine + ATP + H2O = GMP + L-glutamate + AMP + diphosphate + 2 H(+). The protein operates within purine metabolism; GMP biosynthesis; GMP from XMP (L-Gln route): step 1/1. Functionally, catalyzes the synthesis of GMP from XMP. The polypeptide is GMP synthase [glutamine-hydrolyzing] (Aliarcobacter butzleri (strain RM4018) (Arcobacter butzleri)).